A 190-amino-acid polypeptide reads, in one-letter code: GTP cyclohydrolase 1 (190 aa).

The Zn(2+) site is built by C80, H83, and C151.

The protein belongs to the GTP cyclohydrolase I family. Toroid-shaped homodecamer, composed of two pentamers of five dimers.

It catalyses the reaction GTP + H2O = 7,8-dihydroneopterin 3'-triphosphate + formate + H(+). It functions in the pathway cofactor biosynthesis; 7,8-dihydroneopterin triphosphate biosynthesis; 7,8-dihydroneopterin triphosphate from GTP: step 1/1. The polypeptide is GTP cyclohydrolase 1 (Rickettsia typhi (strain ATCC VR-144 / Wilmington)).